Reading from the N-terminus, the 80-residue chain is Myrmicitoxin(1)-Pr1a (80 aa).

The signal sequence occupies residues 1 to 23 (MEIPKLLYIAVIAIGLSGSLTWA). A propeptide spanning residues 24–57 (TPLANPLAEAEAEAKATAEATAEALAEALAEPEP) is cleaved from the precursor. Phenylalanine amide is present on Phe-79.

The protein belongs to the formicidae venom clade 1 family. In terms of tissue distribution, expressed by the venom gland.

The protein localises to the secreted. Vertebrate-selective toxin that causes pain by targeting voltage-gated sodium channels. This Pogonomyrmex rugosus (Desert harvester ant) protein is Myrmicitoxin(1)-Pr1a.